The primary structure comprises 211 residues: Claudin-7 (211 aa).

Residues Met-1–Gln-7 lie on the Cytoplasmic side of the membrane. Residues Leu-8 to Pro-28 form a helical membrane-spanning segment. Over Gln-29–Arg-81 the chain is Extracellular. A helical membrane pass occupies residues Ala-82–Met-102. Over Lys-103–Arg-117 the chain is Cytoplasmic. The chain crosses the membrane as a helical span at residues Ile-118–Ser-138. The Extracellular segment spans residues Trp-139–Glu-160. The helical transmembrane segment at Phe-161–Leu-181 threads the bilayer. Over Leu-182–Val-211 the chain is Cytoplasmic. The segment at Tyr-210–Val-211 is interactions with TJP1, TJP2 and TJP3.

This sequence belongs to the claudin family. Directly interacts with TJP1/ZO-1, TJP2/ZO-2 and TJP3/ZO-3. The phosphorylated form interacts with EPCAM. Does not interact with CD81. Post-translationally, phosphorylated. In terms of tissue distribution, expressed in kidney, lung and prostate. Isoform 1 seems to be predominant, except in some normal prostate samples, where isoform 2 is the major form. Down-regulated in breast cancers, including ductal carcinoma in situ (DCIS), lobular carcinoma in situ (LCIS) and invasive ductal carcinoma (IDC) (at protein level), as well as in several cancer cell lines. Loss of expression correlates with histological grade, occurring predominantly in high-grade lesions.

It is found in the cell membrane. The protein localises to the basolateral cell membrane. Its subcellular location is the cell junction. The protein resides in the tight junction. Its function is as follows. Plays a major role in tight junction-specific obliteration of the intercellular space. The polypeptide is Claudin-7 (CLDN7) (Homo sapiens (Human)).